The primary structure comprises 171 residues: Ribosome maturation factor RimM (171 aa).

Positions 97 to 170 (EGEYYYHEVI…QVTIHVMEGL (74 aa)) constitute a PRC barrel domain.

Belongs to the RimM family. As to quaternary structure, binds ribosomal protein uS19.

It is found in the cytoplasm. Its function is as follows. An accessory protein needed during the final step in the assembly of 30S ribosomal subunit, possibly for assembly of the head region. Essential for efficient processing of 16S rRNA. May be needed both before and after RbfA during the maturation of 16S rRNA. It has affinity for free ribosomal 30S subunits but not for 70S ribosomes. The chain is Ribosome maturation factor RimM from Bacillus cytotoxicus (strain DSM 22905 / CIP 110041 / 391-98 / NVH 391-98).